The primary structure comprises 586 residues: Zinc finger protein Eos (586 aa).

2 disordered regions span residues 1-42 (MHTP…APDF) and 68-98 (EKEFLGAPVGPSVSTPNSQHSSPSRSLSANS). Basic and acidic residues predominate over residues 25-34 (QGKDNLEREL). Positions 79–98 (SVSTPNSQHSSPSRSLSANS) are enriched in polar residues. Lysine 100 participates in a covalent cross-link: Glycyl lysine isopeptide (Lys-Gly) (interchain with G-Cter in SUMO2). Phosphoserine is present on serine 105. 4 C2H2-type zinc fingers span residues 159–181 (LKCDVCGMVCIGPNVLMVHKRSH), 187–209 (FHCNQCGASFTQKGNLLRHIKLH), 215–237 (FKCPFCNYACRRRDALTGHLRTH), and 248–271 (YKCNYCGRSYKQQSTLEEHKERCH). The tract at residues 281–586 (AQALTGQPGD…HIVRGEHKVG (306 aa)) is interaction with FOXP3. Lysine 335 carries the N6-acetyllysine modification. Positions 413-490 (RLELPGSREA…QPPPTIVVGR (78 aa)) are disordered. Positions 423–433 (GEGPEDLGDGG) match the CTBP-binding motif PEDLG motif. Residues 476-485 (QGPPPQPPPT) are compositionally biased toward pro residues. A Glycyl lysine isopeptide (Lys-Gly) (interchain with G-Cter in SUMO2) cross-link involves residue lysine 501. C2H2-type zinc fingers lie at residues 531 to 553 (FKCEHCRILFLDHVMFTIHMGCH) and 559 to 583 (FECNICGYHSQDRYEFSSHIVRGEH).

Belongs to the Ikaros C2H2-type zinc-finger protein family. As to quaternary structure, self-associates. Interacts with other family members; IKZF1, IKZF2, IKZF3 and IKZF5. Interacts with CTBP2, SPI1 and MITF. Interacts with FOXP3 and CTBP1. Expressed mainly in the brain. Up-regulated in long term cultured astrocytes. Down-regulated during osteoclast differentiation.

The protein resides in the nucleus. Its function is as follows. DNA-binding protein that binds to the 5'GGGAATRCC-3' Ikaros-binding sequence. Interacts with SPI1 and MITF to repress transcription of the CTSK and ACP5 promoters via recruitment of corepressors SIN3A and CTBP2. May be involved in the development of central and peripheral nervous systems. Essential for the inhibitory function of regulatory T-cells (Treg). Mediates FOXP3-mediated gene silencing in regulatory T-cells (Treg) via recruitment of corepressor CTBP1. The protein is Zinc finger protein Eos (Ikzf4) of Mus musculus (Mouse).